The primary structure comprises 366 residues: Chorismate synthase (366 aa).

Residues Arg-48 and Arg-54 each coordinate NADP(+). FMN contacts are provided by residues 125–127 (RSS), 238–239 (NA), Gly-278, 293–297 (KPTSS), and Arg-319.

This sequence belongs to the chorismate synthase family. As to quaternary structure, homotetramer. It depends on FMNH2 as a cofactor.

It carries out the reaction 5-O-(1-carboxyvinyl)-3-phosphoshikimate = chorismate + phosphate. Its pathway is metabolic intermediate biosynthesis; chorismate biosynthesis; chorismate from D-erythrose 4-phosphate and phosphoenolpyruvate: step 7/7. Catalyzes the anti-1,4-elimination of the C-3 phosphate and the C-6 proR hydrogen from 5-enolpyruvylshikimate-3-phosphate (EPSP) to yield chorismate, which is the branch point compound that serves as the starting substrate for the three terminal pathways of aromatic amino acid biosynthesis. This reaction introduces a second double bond into the aromatic ring system. The sequence is that of Chorismate synthase from Burkholderia multivorans (strain ATCC 17616 / 249).